The primary structure comprises 70 residues: Large ribosomal subunit protein uL30 (70 aa).

It belongs to the universal ribosomal protein uL30 family. In terms of assembly, part of the 50S ribosomal subunit.

This is Large ribosomal subunit protein uL30 from Renibacterium salmoninarum (strain ATCC 33209 / DSM 20767 / JCM 11484 / NBRC 15589 / NCIMB 2235).